Consider the following 212-residue polypeptide: ER lumen protein-retaining receptor 1-B (212 aa).

Residues 1–4 lie on the Lumenal side of the membrane; the sequence is MNIF. Residues 5-24 form a helical membrane-spanning segment; that stretch reads RFLGDISHLSAIIILLLKIW. The Cytoplasmic segment spans residues 25–32; it reads KSRSCAGI. The chain crosses the membrane as a helical span at residues 33–52; that stretch reads SGKSQLLFAIVFTTRYLDLF. The segment at 47 to 48 is interaction with the K-D-E-L motif on target proteins; it reads RY. Topologically, residues 53–58 are lumenal; the sequence is TNFISF. The chain crosses the membrane as a helical span at residues 59–79; the sequence is YNTSMKVVYVASSYATVWMIY. Topologically, residues 80-92 are cytoplasmic; that stretch reads SKFKATYDGNHDT. The helical transmembrane segment at 93–110 threads the bilayer; sequence FRVEFLIVPTAILSFLVN. Residues 111 to 116 are Lumenal-facing; that stretch reads HDFTPL. A helical transmembrane segment spans residues 117 to 135; sequence EILWTFSIYLESVAILPQL. Over 136–149 the chain is Cytoplasmic; it reads FMVSKTGEAETITS. A helical membrane pass occupies residues 150–168; that stretch reads HYLFALGIYRTLYLFNWIW. The segment at 159–169 is interaction with the K-D-E-L motif on target proteins; the sequence is RTLYLFNWIWR. The Lumenal portion of the chain corresponds to 169–178; that stretch reads RYQFEEFFDL. A helical membrane pass occupies residues 179-199; that stretch reads IAIVAGLVQTVLYCDFFYLYI. Residues 200 to 212 lie on the Cytoplasmic side of the membrane; it reads TKVLKGKKLSLPA. Residues 204–207 are important for recycling of cargo proteins with the sequence motif K-D-E-L from the Golgi to the endoplasmic reticulum; that stretch reads KGKK.

It belongs to the ERD2 family.

The protein localises to the golgi apparatus membrane. Its subcellular location is the cytoplasmic vesicle. It is found in the COPI-coated vesicle membrane. It localises to the endoplasmic reticulum membrane. The protein resides in the endoplasmic reticulum-Golgi intermediate compartment membrane. In terms of biological role, receptor for the C-terminal sequence motif K-D-E-L that is present on endoplasmic reticulum resident proteins and that mediates their recycling from the Golgi back to the endoplasmic reticulum. The polypeptide is ER lumen protein-retaining receptor 1-B (kdelr1-b) (Xenopus laevis (African clawed frog)).